The chain runs to 824 residues: DNA replication helicase (824 aa).

Residue 90–97 (GTAGAGKT) coordinates ATP.

This sequence belongs to the herpesviridae helicase family. As to quaternary structure, associates with the primase and the primase-associated factor to form the helicase-primase complex.

The protein resides in the host nucleus. In terms of biological role, component of the helicase/primase complex. Unwinds the DNA at the replication forks and generates single-stranded DNA for both leading and lagging strand synthesis. The primase synthesizes short RNA primers on the lagging strand that the polymerase elongates using dNTPs. Possesses helicase-like motifs and therefore may act as the helicase subunit of the complex. This chain is DNA replication helicase, found in Human herpesvirus 6A (strain Uganda-1102) (HHV-6 variant A).